A 458-amino-acid chain; its full sequence is Ribosomal protein uS12 methylthiotransferase RimO (458 aa).

The region spanning 26–136 is the MTTase N-terminal domain; sequence PRIGMVSLGC…VLDAVHGAVP (111 aa). Residues cysteine 35, cysteine 71, cysteine 100, cysteine 167, cysteine 171, and cysteine 174 each coordinate [4Fe-4S] cluster. In terms of domain architecture, Radical SAM core spans 153-389; that stretch reads LTPRHYAYLK…MEKAQAISEA (237 aa). The TRAM domain occupies 392-458; the sequence is QAKVGRTMQV…SEYDLWGKLT (67 aa).

This sequence belongs to the methylthiotransferase family. RimO subfamily. Requires [4Fe-4S] cluster as cofactor.

It is found in the cytoplasm. It catalyses the reaction L-aspartate(89)-[ribosomal protein uS12]-hydrogen + (sulfur carrier)-SH + AH2 + 2 S-adenosyl-L-methionine = 3-methylsulfanyl-L-aspartate(89)-[ribosomal protein uS12]-hydrogen + (sulfur carrier)-H + 5'-deoxyadenosine + L-methionine + A + S-adenosyl-L-homocysteine + 2 H(+). Catalyzes the methylthiolation of an aspartic acid residue of ribosomal protein uS12. The sequence is that of Ribosomal protein uS12 methylthiotransferase RimO from Jannaschia sp. (strain CCS1).